A 527-amino-acid polypeptide reads, in one-letter code: Plant-specific TFIIB-related protein PTF2 (527 aa).

The TFIIB-type zinc finger occupies 1 to 30 (MRCKRCNGSNFERDEDTGNSYCGGCGTLRE).

Can form homodimer. Interacts with TBP2. In terms of tissue distribution, expressed in shoot apical meristems, root tips, primordia of lateral roots, inflorescences, developing pollen grains and embryos.

The protein resides in the nucleus. In terms of biological role, plant-specific TFIIB-related protein that plays important roles in pollen germination and embryogenesis, possibly by regulating gene expression through interaction with TBP2 and the subunits of RNA polymerases. Binds double-stranded DNA in vitro. The chain is Plant-specific TFIIB-related protein PTF2 from Arabidopsis thaliana (Mouse-ear cress).